Reading from the N-terminus, the 152-residue chain is Acidic phospholipase A2 homolog taipoxin gamma chain (152 aa).

A signal peptide spans 1-19 (MHPAHLLVLLAVCVSLLGS). Disulfide bonds link cysteine 38–cysteine 104, cysteine 42–cysteine 46, cysteine 54–cysteine 151, cysteine 56–cysteine 72, cysteine 71–cysteine 132, cysteine 78–cysteine 125, cysteine 88–cysteine 118, and cysteine 111–cysteine 123. N-linked (GlcNAc...) asparagine glycosylation occurs at asparagine 97.

This sequence belongs to the phospholipase A2 family. Group I subfamily. D49 sub-subfamily. As to quaternary structure, heterotrimer of alpha, beta, and gamma chains; non-covalently linked. Post-translationally, contains 0.9% fucose, 2.2% mannose, 4.2% N-acetyl-D-glucosamine, 3.5% galactose, and 3.8% N-acetyl-neuraminic acid (sialic acid). In terms of tissue distribution, expressed by the venom gland.

It is found in the secreted. In terms of biological role, heterotrimer: Snake venom phospholipase A2 (PLA2) heterotrimer that acts as a potent presynaptic neurotoxin by blocking synaptic transmission and synaptic vesicle recycling. May act by binding in a calcium-dependent fashion to neurotonal pentraxin-1 (NPTX1) and neurotonal pentraxin-2 (NPTX2), but not to neuronal pentraxin receptor (NPTXR). Also binds to taipoxin-associated calcium binding protein 49 (RCN2), a protein localized in the lumen of endoplasmic reticulum. Its function is as follows. Monomer (gamma chain): Snake venom phospholipase A2 homolog that is neither toxic nor enzymatically active. Does not bind calcium. The polypeptide is Acidic phospholipase A2 homolog taipoxin gamma chain (Oxyuranus scutellatus scutellatus (Australian taipan)).